Reading from the N-terminus, the 97-residue chain is Putative pterin-4-alpha-carbinolamine dehydratase (97 aa).

Belongs to the pterin-4-alpha-carbinolamine dehydratase family.

It catalyses the reaction (4aS,6R)-4a-hydroxy-L-erythro-5,6,7,8-tetrahydrobiopterin = (6R)-L-erythro-6,7-dihydrobiopterin + H2O. This chain is Putative pterin-4-alpha-carbinolamine dehydratase, found in Rhizorhabdus wittichii (strain DSM 6014 / CCUG 31198 / JCM 15750 / NBRC 105917 / EY 4224 / RW1) (Sphingomonas wittichii).